The following is a 144-amino-acid chain: Large ribosomal subunit protein uL15 (144 aa).

The tract at residues 1 to 53 (MRLNTLSPAEGAKHAPKRVGRGIGSGLGKTGGRGHKGQKSRSGGGVRRGFEGG) is disordered. Over residues 21–31 (RGIGSGLGKTG) the composition is skewed to gly residues.

This sequence belongs to the universal ribosomal protein uL15 family. As to quaternary structure, part of the 50S ribosomal subunit.

Functionally, binds to the 23S rRNA. The sequence is that of Large ribosomal subunit protein uL15 from Proteus mirabilis (strain HI4320).